The primary structure comprises 1168 residues: ATP-dependent DNA helicase mph1 (1168 aa).

Polar residues-rich tracts occupy residues asparagine 24–serine 38 and proline 59–alanine 68. Residues asparagine 24–glutamine 132 form a disordered region. Over residues arginine 71–serine 88 the composition is skewed to low complexity. The segment covering leucine 89–tryptophan 104 has biased composition (polar residues). The Helicase ATP-binding domain maps to isoleucine 162–histidine 330. Leucine 175–threonine 182 contacts ATP. Residues aspartate 278–histidine 281 carry the DEAH box motif. The Helicase C-terminal domain maps to leucine 506 to leucine 665. 2 disordered regions span residues serine 690–proline 717 and alanine 830–glutamate 1168. Residues serine 701–phenylalanine 714 are compositionally biased toward basic residues. Residues threonine 895–threonine 907 are compositionally biased toward polar residues. Residues aspartate 920–glutamate 936 are compositionally biased toward acidic residues. Basic residues predominate over residues arginine 941–glutamine 959. Over residues glycine 985–isoleucine 996 the composition is skewed to acidic residues. Residues glutamate 1001–lysine 1030 are compositionally biased toward polar residues.

The protein belongs to the DEAD box helicase family. DEAH subfamily. FANCM sub-subfamily. As to quaternary structure, interacts with the MHF histone-fold complex to form the FANCM-MHF complex.

It localises to the nucleus. The catalysed reaction is ATP + H2O = ADP + phosphate + H(+). ATP-dependent DNA helicase involved in DNA damage repair by homologous recombination and in genome maintenance. Capable of unwinding D-loops. Plays a role in limiting crossover recombinants during mitotic DNA double-strand break (DSB) repair. Component of a FANCM-MHF complex which promotes gene conversion at blocked replication forks, probably by reversal of the stalled fork. The polypeptide is ATP-dependent DNA helicase mph1 (Neurospora crassa (strain ATCC 24698 / 74-OR23-1A / CBS 708.71 / DSM 1257 / FGSC 987)).